A 476-amino-acid polypeptide reads, in one-letter code: Ribosomal protein uS12 methylthiotransferase RimO (476 aa).

Residues 7 to 123 (KSLYMMTLGC…IGDLLAAEAS (117 aa)) form the MTTase N-terminal domain. The [4Fe-4S] cluster site is built by C16, C52, C86, C158, C162, and C165. Residues 144–373 (SMPKYTAYLK…MAIQKRINRE (230 aa)) form the Radical SAM core domain. The TRAM domain occupies 376 to 444 (KKLVGKRLEV…DYDLVARVVE (69 aa)). The span at 445 to 459 (RPDPKQREHTARDAH) shows a compositional bias: basic and acidic residues. Residues 445–476 (RPDPKQREHTARDAHPAPLPVAAMQRPAPRAE) are disordered.

Belongs to the methylthiotransferase family. RimO subfamily. Requires [4Fe-4S] cluster as cofactor.

The protein resides in the cytoplasm. It catalyses the reaction L-aspartate(89)-[ribosomal protein uS12]-hydrogen + (sulfur carrier)-SH + AH2 + 2 S-adenosyl-L-methionine = 3-methylsulfanyl-L-aspartate(89)-[ribosomal protein uS12]-hydrogen + (sulfur carrier)-H + 5'-deoxyadenosine + L-methionine + A + S-adenosyl-L-homocysteine + 2 H(+). In terms of biological role, catalyzes the methylthiolation of an aspartic acid residue of ribosomal protein uS12. This chain is Ribosomal protein uS12 methylthiotransferase RimO, found in Myxococcus xanthus (strain DK1622).